The following is a 354-amino-acid chain: Chorismate synthase (354 aa).

Residue Arg-48 participates in NADP(+) binding. FMN contacts are provided by residues 125–127, 239–240, Gly-280, 295–299, and Arg-321; these read RSS, NA, and KPVAT.

Belongs to the chorismate synthase family. In terms of assembly, homotetramer. It depends on FMNH2 as a cofactor.

It catalyses the reaction 5-O-(1-carboxyvinyl)-3-phosphoshikimate = chorismate + phosphate. It participates in metabolic intermediate biosynthesis; chorismate biosynthesis; chorismate from D-erythrose 4-phosphate and phosphoenolpyruvate: step 7/7. Its function is as follows. Catalyzes the anti-1,4-elimination of the C-3 phosphate and the C-6 proR hydrogen from 5-enolpyruvylshikimate-3-phosphate (EPSP) to yield chorismate, which is the branch point compound that serves as the starting substrate for the three terminal pathways of aromatic amino acid biosynthesis. This reaction introduces a second double bond into the aromatic ring system. The sequence is that of Chorismate synthase from Christiangramia forsetii (strain DSM 17595 / CGMCC 1.15422 / KT0803) (Gramella forsetii).